The primary structure comprises 92 residues: Putative membrane protein insertion efficiency factor (92 aa).

It belongs to the UPF0161 family.

It localises to the cell inner membrane. Could be involved in insertion of integral membrane proteins into the membrane. This is Putative membrane protein insertion efficiency factor from Synechococcus sp. (strain CC9902).